The sequence spans 161 residues: Peroxynitrite isomerase 2 (161 aa).

A GXWXGXG motif is present at residues 17 to 23; sequence GTWAGQG. H152 is a binding site for heme b.

The protein belongs to the nitrobindin family. Homodimer. Heme b serves as cofactor.

It carries out the reaction peroxynitrite = nitrate. Its pathway is nitrogen metabolism. Its function is as follows. Heme-binding protein able to scavenge peroxynitrite and to protect free L-tyrosine against peroxynitrite-mediated nitration, by acting as a peroxynitrite isomerase that converts peroxynitrite to nitrate. Therefore, this protein likely plays a role in peroxynitrite sensing and in the detoxification of reactive nitrogen and oxygen species (RNS and ROS, respectively). Is able to bind nitric oxide (NO) in vitro, but may act as a sensor of peroxynitrite levels in vivo. This Mycobacterium marinum (strain ATCC BAA-535 / M) protein is Peroxynitrite isomerase 2.